The sequence spans 984 residues: MSGAGNKRAAGEPGPSAPPEKKAGVEDSGTTVETIKLGGVSSTEELDIRTLQTKNRKLAEMLDQRQAIEDELREHIEKLERRQATDDASLLIINRYWNQFDENIRIILKRFDLDQGLGDLLSERKALVVPEPEPDSDSNQERKDERERGEGLEPAFSFLATLASSTSEEIESQLQERVESSRRAVAQIVTMYDKLQEKVDVLSHKLNSGDISLMEEAVLELNSYLSHENGRLQELADTLQEKHRIMSQEFSKLQEKVETAESRVSVLETMIDDLQWNIDKIRKREQRLNRHLADVLERVNSKGYKVYGAGSSLYGGTITINARKFEEMNAELEENKELAGNRLNELEELRHDLQEVTTQNEKLKVELRRAVEEAVKETPEYRCMQSQFSVLYNESLQLKAHLDEARTLLHGTRTTHQRQVELIERDEVSLHKKLRTEVMQLEDTLAQVRKEYEMLRIEFEQTLAANEQAGPINREMRHLISSLQNHNHQLKGEVLRYKRKLREAQSDLSKIRSRSGSALLQSQSSTEDTKEEPPEIKQEPDDPSSQVSAPRAASEEASEVKARRDEEERERERREREREREKEKEKEREREKEKEKEKEREREKQKQKESEKERESKEKEKGKHEDGRKKEAEVIKQLKAELKKAQESQKEMKLLLDMYRSAPKEQRDKVQLMAAEKKAKAELEELRQRVKELEDKEKKESKKMADEDALRKIRAVEEQIEYLQKKLAMAKQEEEALLSEMDVTGQAFEDMQEQNIRLMQQLREKDDANFKLMSERIKSNQIHKLLKEEKEELADQVLTLKTQVDAQLQVVRKLEEKEHLLQSSIGTGEKELGLRTQALEMNKRKAMDAAQLADDLKTQLELAQKKLHDFQDEIVESRVTREKEMFNFKRAEEDISRLRRKLETTKKPDMVPNCDEILMEEIKDYKARLTCPCCNMRKKDAVLTKCFHVFCFECVKTRYDTRQRKCPKCNAAFGANDFHRIYIG.

Positions 1 to 34 are disordered; the sequence is MSGAGNKRAAGEPGPSAPPEKKAGVEDSGTTVET. The stretch at 43 to 90 forms a coiled coil; the sequence is TEELDIRTLQTKNRKLAEMLDQRQAIEDELREHIEKLERRQATDDASL. The tract at residues 128 to 150 is disordered; the sequence is VVPEPEPDSDSNQERKDERERGE. A compositionally biased stretch (basic and acidic residues) spans 139–150; sequence NQERKDERERGE. Coiled-coil stretches lie at residues 236-378 and 429-907; these read ADTL…VKET and SLHK…TTKK. A disordered region spans residues 506 to 632; that stretch reads SDLSKIRSRS…KHEDGRKKEA (127 aa). Over residues 514-526 the composition is skewed to polar residues; it reads RSGSALLQSQSST. 2 stretches are compositionally biased toward basic and acidic residues: residues 527-540 and 558-632; these read EDTK…KQEP and SEVK…KKEA. The segment at 931-970 adopts an RING-type zinc-finger fold; the sequence is CPCCNMRKKDAVLTKCFHVFCFECVKTRYDTRQRKCPKCN.

The protein belongs to the BRE1 family. As to quaternary structure, component of the RNF20/40 complex (also known as BRE1 complex).

It is found in the nucleus. The catalysed reaction is S-ubiquitinyl-[E2 ubiquitin-conjugating enzyme]-L-cysteine + [acceptor protein]-L-lysine = [E2 ubiquitin-conjugating enzyme]-L-cysteine + N(6)-ubiquitinyl-[acceptor protein]-L-lysine.. Its pathway is protein modification; protein ubiquitination. In terms of biological role, component of the RNF20/40 E3 ubiquitin-protein ligase complex that mediates monoubiquitination of 'Lys-120' of histone H2B (H2BK120ub1). H2BK120ub1 gives a specific tag for epigenetic transcriptional activation and is also prerequisite for histone H3 'Lys-4' and 'Lys-79' methylation (H3K4me and H3K79me, respectively). In Gallus gallus (Chicken), this protein is E3 ubiquitin-protein ligase BRE1A (RNF20).